The sequence spans 577 residues: Arginine--tRNA ligase (577 aa).

Residues 122–132 carry the 'HIGH' region motif; the sequence is PNVAKEMHVGH.

This sequence belongs to the class-I aminoacyl-tRNA synthetase family. As to quaternary structure, monomer.

It localises to the cytoplasm. It carries out the reaction tRNA(Arg) + L-arginine + ATP = L-arginyl-tRNA(Arg) + AMP + diphosphate. This is Arginine--tRNA ligase from Escherichia coli O139:H28 (strain E24377A / ETEC).